The sequence spans 198 residues: Recombination protein RecR (198 aa).

The C4-type zinc-finger motif lies at 57-72 (CSVCGNLTDEDPCSIC). In terms of domain architecture, Toprim spans 80-175 (SMILVVEDSK…KVTRLARGLA (96 aa)).

The protein belongs to the RecR family.

Functionally, may play a role in DNA repair. It seems to be involved in an RecBC-independent recombinational process of DNA repair. It may act with RecF and RecO. This Streptococcus uberis (strain ATCC BAA-854 / 0140J) protein is Recombination protein RecR.